The following is a 489-amino-acid chain: MGSQIIHNSQKPHVVCVPYPAQGHINPMMRVAKLLHARGFYVTFVNTVYNHNRFLRSRGSNALDGLPSFRFESIADGLPETDMDATQDITALCESTMKNCLAPFRELLQRINAGDNVPPVSCIVSDGCMSFTLDVAEELGVPEVLFWTTSGCAFLAYLHFYLFIEKGLCPLKDESYLTKEYLEDTVIDFIPTMKNVKLKDIPSFIRTTNPDDVMISFALRETERAKRASAIILNTFDDLEHDVVHAMQSILPPVYSVGPLHLLANREIEEGSEIGMMSSNLWKEEMECLDWLDTKTQNSVIYINFGSITVLSVKQLVEFAWGLAGSGKEFLWVIRPDLVAGEEAMVPPDFLMETKDRSMLASWCPQEKVLSHPAIGGFLTHCGWNSILESLSCGVPMVCWPFFADQQMNCKFCCDEWDVGIEIGGDVKREEVEAVVRELMDGEKGKKMREKAVEWQRLAEKATEHKLGSSVMNFETVVSKFLLGQKSQD.

Residues serine 307, 364–366 (CPQ), 381–389 (HCGWNSILE), and 403–406 (FADQ) contribute to the UDP-alpha-D-glucose site.

This sequence belongs to the UDP-glycosyltransferase family. In terms of tissue distribution, expressed in root tips, lateral root initials, root apex, shoots, leaf periphery, leaf primordia and flowers.

Functionally, involved in the O-glucosylation of trans-zeatin and dihydrozeatin. Also active in vitro on cis-zeatin. Not active on N-glucosylated substrates. In Arabidopsis thaliana (Mouse-ear cress), this protein is UDP-glycosyltransferase 85A1 (UGT85A1).